A 400-amino-acid chain; its full sequence is Lysophospholipid transporter LplT (400 aa).

12 helical membrane-spanning segments follow: residues 19 to 39, 53 to 73, 91 to 111, 139 to 159, 164 to 184, 195 to 213, 227 to 247, 257 to 277, 281 to 301, 304 to 324, 352 to 372, and 373 to 393; these read VIVA…ATLA, VLQM…GQIA, AGAA…LVGI, LMEA…GVLA, IAAL…NLFI, SWRL…VVLW, LFWG…PVAL, YLNA…AKLV, TVSR…IFSL, ALLP…FFVV, NSAM…GVPA, and VAIG…LWIW.

Belongs to the major facilitator superfamily. LplT (TC 2.A.1.42) family.

It is found in the cell inner membrane. Functionally, catalyzes the facilitated diffusion of 2-acyl-glycero-3-phosphoethanolamine (2-acyl-GPE) into the cell. The protein is Lysophospholipid transporter LplT of Salmonella heidelberg (strain SL476).